The chain runs to 580 residues: DBIRD complex subunit ZNF326 (580 aa).

The mediates transcriptional activation stretch occupies residues 1-124 (MDFEDDYVHS…YRNSLDSFGG (124 aa)). 12 positions are modified to phosphoserine: serine 48, serine 56, serine 63, serine 69, serine 81, serine 82, serine 91, serine 106, serine 114, serine 118, serine 121, and serine 137. Lysine 140 is covalently cross-linked (Glycyl lysine isopeptide (Lys-Gly) (interchain with G-Cter in SUMO2)). Positions 156–196 (SYSSFSSPHMKPAPVGSRGRGTPAYPESTFGSRSYDAFGGP) are disordered. Arginine 173 is modified (omega-N-methylarginine). The residue at position 212 (serine 212) is a Phosphoserine. An Omega-N-methylarginine modification is found at arginine 235. The Bipartite nuclear localization signal motif lies at 238–260 (KRKMMQIFIKPGGAFIKKPKLAK). A Glycyl lysine isopeptide (Lys-Gly) (interchain with G-Cter in SUMO2) cross-link involves residue lysine 240. Lysine 247 bears the N6-acetyllysine; alternate mark. Lysine 247 is covalently cross-linked (Glycyl lysine isopeptide (Lys-Gly) (interchain with G-Cter in SUMO2); alternate). Glycyl lysine isopeptide (Lys-Gly) (interchain with G-Cter in SUMO2) cross-links involve residues lysine 254 and lysine 264. A disordered region spans residues 256–302 (PKLAKPMDKMNLSKSPTKTDPKNEEEEKRRIEARREKQRRRREKNSE). At serine 270 the chain carries Phosphoserine. The segment covering 272 to 290 (TKTDPKNEEEEKRRIEARR) has biased composition (basic and acidic residues). A C2H2 AKAP95-type 1 zinc finger spans residues 314–336 (CSFCKFRTFEEKDIELHLESSSH). Lysine 401 is covalently cross-linked (Glycyl lysine isopeptide (Lys-Gly) (interchain with G-Cter in SUMO2)). The C2H2 AKAP95-type 2 zinc finger occupies 407 to 430 (CSACSVYIPALHSSVQLHLKSPDH). Residues lysine 459 and lysine 467 each participate in a glycyl lysine isopeptide (Lys-Gly) (interchain with G-Cter in SUMO2) cross-link. The segment at 470–580 (NPFEIQDHPQ…ATEQCEHRQM (111 aa)) is disordered. Over residues 483-529 (IEGDEEDEEKIDEPIEEEEEEEEEEEEEGEEAGSVEEEGDVEGEEGT) the composition is skewed to acidic residues. Positions 530–539 (AEAAAAGEAD) are enriched in low complexity. The segment covering 540 to 562 (AVGEAEGAGEAEEAEEEEEEEGT) has biased composition (acidic residues).

Belongs to the AKAP95 family. Component of the DBIRD complex. Interacts with CCAR2; the interaction is direct. Ubiquitously expressed in adult tissues. Highly expressed in neuronal tissues such as brain and neural tube.

Its subcellular location is the nucleus matrix. Its function is as follows. Core component of the DBIRD complex, a multiprotein complex that acts at the interface between core mRNP particles and RNA polymerase II (RNAPII) and integrates transcript elongation with the regulation of alternative splicing: the DBIRD complex affects local transcript elongation rates and alternative splicing of a large set of exons embedded in (A + T)-rich DNA regions. May also play a role in neuronal differentiation. Able to bind DNA and activate expression in vitro. This chain is DBIRD complex subunit ZNF326 (Znf326), found in Mus musculus (Mouse).